Here is a 498-residue protein sequence, read N- to C-terminus: Protein YhjJ (498 aa).

Residues 1–24 (MQGTKIRLLAGGLLMMATAGYVQA) form the signal peptide.

This sequence belongs to the peptidase M16 family.

It is found in the periplasm. This is Protein YhjJ (yhjJ) from Escherichia coli (strain K12).